The sequence spans 71 residues: Brevinin-1CG4 (71 aa).

A signal peptide spans 1–22; that stretch reads MFTLKKSLLLLFFLGTINLSLC. A propeptide spans 23-45 (removed in mature form); sequence EQERNADEEERRDDSDKRDVEVE. A disulfide bond links Cys-65 and Cys-71.

The protein belongs to the frog skin active peptide (FSAP) family. Brevinin subfamily. Expressed by the skin glands.

Its subcellular location is the secreted. Its function is as follows. Antimicrobial peptide active against a variety of Gram-positive and some Gram-negative bacterial strains. Has antifungal activity against C.albicans ATCC 10231 and a slime mold isolate. Has hemolytic activity against human erythrocytes. The polypeptide is Brevinin-1CG4 (Amolops chunganensis (Chungan torrent frog)).